Consider the following 209-residue polypeptide: NADH-ubiquinone oxidoreductase subunit 9 (209 aa).

The protein belongs to the complex I 30 kDa subunit family. In terms of assembly, complex I is composed of about 30 different subunits.

Its subcellular location is the mitochondrion inner membrane. The enzyme catalyses a ubiquinone + NADH + 5 H(+)(in) = a ubiquinol + NAD(+) + 4 H(+)(out). In terms of biological role, core subunit of the mitochondrial membrane respiratory chain NADH dehydrogenase (Complex I) that is believed to belong to the minimal assembly required for catalysis. Complex I functions in the transfer of electrons from NADH to the respiratory chain. The immediate electron acceptor for the enzyme is believed to be ubiquinone. The protein is NADH-ubiquinone oxidoreductase subunit 9 (NAD9) of Paramecium primaurelia.